The primary structure comprises 629 residues: tRNA uridine 5-carboxymethylaminomethyl modification enzyme MnmG (629 aa).

13 to 18 (GGGHAG) serves as a coordination point for FAD. 273–287 (GPRYCPSIEDKVVRF) is a binding site for NAD(+).

The protein belongs to the MnmG family. Homodimer. Heterotetramer of two MnmE and two MnmG subunits. The cofactor is FAD.

The protein localises to the cytoplasm. Functionally, NAD-binding protein involved in the addition of a carboxymethylaminomethyl (cmnm) group at the wobble position (U34) of certain tRNAs, forming tRNA-cmnm(5)s(2)U34. The sequence is that of tRNA uridine 5-carboxymethylaminomethyl modification enzyme MnmG from Alkalilimnicola ehrlichii (strain ATCC BAA-1101 / DSM 17681 / MLHE-1).